We begin with the raw amino-acid sequence, 232 residues long: DnaJ homolog subfamily B member 8 (232 aa).

The region spanning 3-69 (NYYEVLGVQA…KKRSLYDRAG (67 aa)) is the J domain.

As to quaternary structure, interacts with histone deacetylases HDAC4, HDAC6, and SIRT2, HDAC activity is required for antiaggregation.

Efficient suppressor of aggregation and toxicity of disease-associated polyglutamine proteins. This is DnaJ homolog subfamily B member 8 (DNAJB8) from Homo sapiens (Human).